We begin with the raw amino-acid sequence, 152 residues long: uncharacterized protein (152 aa).

The protein belongs to the antirestriction protein family.

This is an uncharacterized protein from Escherichia coli (strain K12).